The primary structure comprises 483 residues: UDP-N-acetylmuramate--L-alanine ligase (483 aa).

G112–T118 contacts ATP.

The protein belongs to the MurCDEF family.

It localises to the cytoplasm. The catalysed reaction is UDP-N-acetyl-alpha-D-muramate + L-alanine + ATP = UDP-N-acetyl-alpha-D-muramoyl-L-alanine + ADP + phosphate + H(+). It participates in cell wall biogenesis; peptidoglycan biosynthesis. Cell wall formation. This chain is UDP-N-acetylmuramate--L-alanine ligase, found in Ralstonia pickettii (strain 12J).